Here is a 463-residue protein sequence, read N- to C-terminus: Fumarate hydratase class II (463 aa).

Residues 97–99 (SGT), Arg-125, 128–131 (HPND), 138–140 (SSN), and Thr-186 contribute to the substrate site. Positions 121–134 (RGEGRKVHPNDHVN) are enriched in basic and acidic residues. Positions 121-142 (RGEGRKVHPNDHVNRGQSSNDT) are disordered. Catalysis depends on His-187, which acts as the Proton donor/acceptor. Residue Ser-317 is part of the active site. Residues Ser-318 and 323–325 (KVN) contribute to the substrate site.

The protein belongs to the class-II fumarase/aspartase family. Fumarase subfamily. As to quaternary structure, homotetramer.

It localises to the cytoplasm. The enzyme catalyses (S)-malate = fumarate + H2O. It participates in carbohydrate metabolism; tricarboxylic acid cycle; (S)-malate from fumarate: step 1/1. Functionally, involved in the TCA cycle. Catalyzes the stereospecific interconversion of fumarate to L-malate. This chain is Fumarate hydratase class II, found in Bordetella bronchiseptica (strain ATCC BAA-588 / NCTC 13252 / RB50) (Alcaligenes bronchisepticus).